The primary structure comprises 307 residues: Malate dehydrogenase (307 aa).

NAD(+)-binding positions include 8–13 (GAGNVG) and D32. Residues R81 and R87 each coordinate substrate. NAD(+) is bound by residues N94 and 117–119 (VSN). Positions 119 and 150 each coordinate substrate. The Proton acceptor role is filled by H174.

This sequence belongs to the LDH/MDH superfamily. MDH type 3 family.

It catalyses the reaction (S)-malate + NAD(+) = oxaloacetate + NADH + H(+). Functionally, catalyzes the reversible oxidation of malate to oxaloacetate. This Dehalococcoides mccartyi (strain ATCC BAA-2100 / JCM 16839 / KCTC 5957 / BAV1) protein is Malate dehydrogenase.